The sequence spans 363 residues: Methylthioribose-1-phosphate isomerase (363 aa).

The active-site Proton donor is Asp-253.

The protein belongs to the eIF-2B alpha/beta/delta subunits family. MtnA subfamily.

Its subcellular location is the cytoplasm. The protein localises to the nucleus. The catalysed reaction is 5-(methylsulfanyl)-alpha-D-ribose 1-phosphate = 5-(methylsulfanyl)-D-ribulose 1-phosphate. It participates in amino-acid biosynthesis; L-methionine biosynthesis via salvage pathway; L-methionine from S-methyl-5-thio-alpha-D-ribose 1-phosphate: step 1/6. Catalyzes the interconversion of methylthioribose-1-phosphate (MTR-1-P) into methylthioribulose-1-phosphate (MTRu-1-P). This chain is Methylthioribose-1-phosphate isomerase, found in Drosophila grimshawi (Hawaiian fruit fly).